Here is a 782-residue protein sequence, read N- to C-terminus: Potassium transporter 6 (782 aa).

Residues 1-18 (MEIESGSYQNAKKESWRT) lie on the Cytoplasmic side of the membrane. Residues 19 to 39 (VLTLAYQSLGVVYGDLSISPL) form a helical membrane-spanning segment. Residues 40 to 61 (YVYKSTFAEDIHHSESNEEIFG) are Extracellular-facing. The chain crosses the membrane as a helical span at residues 62-82 (VLSFIFWTITLVPLLKYVFIV). The Cytoplasmic portion of the chain corresponds to 83 to 153 (LRADDNGEGG…TLEKHGVLQK (71 aa)). A helical membrane pass occupies residues 154–174 (ILLVLALIGTCMVIGDGVLTP). The Extracellular segment spans residues 175–195 (AISVFSAVSGVELSMSKEHHK). A helical membrane pass occupies residues 196–216 (YIELPAACVILIGLFALQHYG). Topologically, residues 217–219 (THR) are cytoplasmic. A helical membrane pass occupies residues 220–240 (VGFLFAPVILLWLMCISAIGV). Over 241–270 (YNIFHWNPHVYQALSPYYMYKFLKKTQSRG) the chain is Extracellular. A helical transmembrane segment spans residues 271-291 (WMSLGGILLCITGSEAMFADL). Residues 292-296 (GHFSQ) are Cytoplasmic-facing. A helical membrane pass occupies residues 297–317 (LSIKIAFTSLVYPSLILAYMG). Over 318–347 (QAAYLSQHHIIESEYNIGFYVSVPERLRWP) the chain is Extracellular. A helical transmembrane segment spans residues 348–368 (VLVIAILAAVVGSQAIITGTF). Residues 369–395 (SIIKQCSALGCFPKVKIVHTSSKIHGQ) lie on the Cytoplasmic side of the membrane. The helical transmembrane segment at 396–416 (IYIPEINWILMVLCLAVTIGF) threads the bilayer. Residues 417 to 421 (RDTKR) are Extracellular-facing. Transmembrane regions (helical) follow at residues 422–442 (LGNA…CLMS) and 443–463 (LVIV…VVFF). Residues 464 to 474 (GTIESLYFSAS) lie on the Extracellular side of the membrane. Residues 475–495 (LIKFLEGAWVPIALAFCFLLA) traverse the membrane as a helical segment. Residues 496 to 782 (MCTWHYGTLK…TLEVGMIYNV (287 aa)) lie on the Cytoplasmic side of the membrane. A compositionally biased stretch (basic and acidic residues) spans 664–675 (YESDIDDPDKPG). Positions 664–693 (YESDIDDPDKPGTSEIRSPKPKKKSKSKVK) are disordered. Residues 682 to 693 (PKPKKKSKSKVK) show a composition bias toward basic residues.

Belongs to the HAK/KUP transporter (TC 2.A.72.3) family.

It is found in the cell membrane. Its function is as follows. Probable potassium transporter. This is Potassium transporter 6 (POT6) from Arabidopsis thaliana (Mouse-ear cress).